A 137-amino-acid chain; its full sequence is 6,7-dimethyl-8-ribityllumazine synthase (137 aa).

5-amino-6-(D-ribitylamino)uracil-binding positions include F11, 43-45, and 67-69; these read SFD and CVI. 72-73 is a binding site for (2S)-2-hydroxy-3-oxobutyl phosphate; the sequence is DT. H75 serves as the catalytic Proton donor. A 5-amino-6-(D-ribitylamino)uracil-binding site is contributed by L100. R115 provides a ligand contact to (2S)-2-hydroxy-3-oxobutyl phosphate.

This sequence belongs to the DMRL synthase family. Forms an icosahedral capsid composed of 60 subunits, arranged as a dodecamer of pentamers.

The enzyme catalyses (2S)-2-hydroxy-3-oxobutyl phosphate + 5-amino-6-(D-ribitylamino)uracil = 6,7-dimethyl-8-(1-D-ribityl)lumazine + phosphate + 2 H2O + H(+). Its pathway is cofactor biosynthesis; riboflavin biosynthesis; riboflavin from 2-hydroxy-3-oxobutyl phosphate and 5-amino-6-(D-ribitylamino)uracil: step 1/2. In terms of biological role, catalyzes the formation of 6,7-dimethyl-8-ribityllumazine by condensation of 5-amino-6-(D-ribitylamino)uracil with 3,4-dihydroxy-2-butanone 4-phosphate. This is the penultimate step in the biosynthesis of riboflavin. This is 6,7-dimethyl-8-ribityllumazine synthase from Methanococcus maripaludis (strain C5 / ATCC BAA-1333).